The primary structure comprises 559 residues: Potassium-transporting ATPase potassium-binding subunit (559 aa).

12 helical membrane-spanning segments follow: residues 7–27 (LLIA…GSGL), 63–83 (LLAL…LLFW), 132–152 (GLTV…FALI), 170–190 (LVRI…LFFI), 253–273 (MVQM…FGEA), 283–303 (LLWA…WAEV), 327–347 (FGVL…CGAV), 356–376 (ALGG…FGGV), 379–399 (GLYG…LMIG), 416–436 (MTAL…ALAM), 484–504 (LLAF…MAIA), and 524–544 (GALF…LTFI).

Belongs to the KdpA family. The system is composed of three essential subunits: KdpA, KdpB and KdpC.

Its subcellular location is the cell inner membrane. In terms of biological role, part of the high-affinity ATP-driven potassium transport (or Kdp) system, which catalyzes the hydrolysis of ATP coupled with the electrogenic transport of potassium into the cytoplasm. This subunit binds the periplasmic potassium ions and delivers the ions to the membrane domain of KdpB through an intramembrane tunnel. The protein is Potassium-transporting ATPase potassium-binding subunit of Salmonella arizonae (strain ATCC BAA-731 / CDC346-86 / RSK2980).